Reading from the N-terminus, the 178-residue chain is ATP-dependent protease subunit HslV (178 aa).

Residue Thr-5 is part of the active site. The Na(+) site is built by Gly-161, Cys-164, and Thr-167.

It belongs to the peptidase T1B family. HslV subfamily. In terms of assembly, a double ring-shaped homohexamer of HslV is capped on each side by a ring-shaped HslU homohexamer. The assembly of the HslU/HslV complex is dependent on binding of ATP.

The protein resides in the cytoplasm. It catalyses the reaction ATP-dependent cleavage of peptide bonds with broad specificity.. With respect to regulation, allosterically activated by HslU binding. Protease subunit of a proteasome-like degradation complex believed to be a general protein degrading machinery. This chain is ATP-dependent protease subunit HslV, found in Aliarcobacter butzleri (strain RM4018) (Arcobacter butzleri).